Reading from the N-terminus, the 453-residue chain is Choline kinase alpha (453 aa).

A disordered region spans residues 22–81 (CGGNAAPTPGVGQQRDAAGELESKQLGGRTQPLALPPPPPPPLPLPPPPSPPLADEQPEP). The segment covering 55 to 73 (ALPPPPPPPLPLPPPPSPP) has biased composition (pro residues). At Ser71 the chain carries Phosphoserine. Residues 113–119 (RGGLSNM), Arg142, and 203–209 (QFIPSRR) contribute to the ATP site. Position 115 to 117 (115 to 117 (GLS)) interacts with phosphocholine. N6-acetyllysine is present on Lys243. Ser275 carries the phosphoserine modification. Residues Gln304 and Asp326 each contribute to the ATP site.

It belongs to the choline/ethanolamine kinase family. In terms of assembly, homodimer. Heterodimer with CHKB. Monomer; acetylation by KAT5 promotes dissociation of the homodimer and monomerization. In terms of processing, phosphorylated at Ser-275 by AMPK in response to glucose deprivation, leading to localization to lipid droplets. Acetylated by KAT5 at Lys-243 following phosphorylation by AMPK, leading to monomerization and conversion into a tyrosine-protein kinase. In terms of tissue distribution, expressed ubiquitously with the highest level in testis.

The protein resides in the cytoplasm. It is found in the cytosol. It localises to the lipid droplet. It carries out the reaction choline + ATP = phosphocholine + ADP + H(+). The catalysed reaction is ethanolamine + ATP = phosphoethanolamine + ADP + H(+). The enzyme catalyses L-tyrosyl-[protein] + ATP = O-phospho-L-tyrosyl-[protein] + ADP + H(+). It functions in the pathway phospholipid metabolism; phosphatidylcholine biosynthesis; phosphocholine from choline: step 1/1. It participates in phospholipid metabolism; phosphatidylethanolamine biosynthesis; phosphatidylethanolamine from ethanolamine: step 1/3. Functionally, plays a key role in phospholipid biosynthesis by catalyzing the phosphorylation of free choline to phosphocholine, the first step in phosphatidylcholine biosynthesis. Also phosphorylates ethanolamine, thereby contributing to phosphatidylethanolamine biosynthesis. Has higher activity with choline. In terms of biological role, this isoform plays a key role in lipolysis of lipid droplets following glucose deprivation. In response to glucose deprivation, phosphorylated by AMPK, promoting localization to lipid droplets. Phosphorylation is followed by acetylation by KAT5, leading to dissociation of the homodimer into a monomer. Monomeric CHKA isoform 1 is converted into a tyrosine-protein kinase, which phosphorylates lipid droplet structural proteins PLIN2 and PLIN3, leading to lipolysis of lipid droplets. In Mus musculus (Mouse), this protein is Choline kinase alpha (Chka).